Consider the following 233-residue polypeptide: Attacin-B (233 aa).

The first 17 residues, 1-17 (MFAKLFLVSVLLVGVNS), serve as a signal peptide directing secretion. Positions 18-46 (RYVLVEEPGYYDKQYEEQPQQWVNSRVRR) are excised as a propeptide.

The protein belongs to the attacin/sarcotoxin-2 family.

It localises to the secreted. Its function is as follows. Hemolymph antibacterial protein. This Hyalophora cecropia (Cecropia moth) protein is Attacin-B.